The following is a 334-amino-acid chain: Glutaredoxin-3 (334 aa).

A2 bears the N-acetylalanine mark. The Thioredoxin domain maps to 2 to 116 (AGGAAEAAAA…LTKKVQRHAS (115 aa)). Positions 110–131 (KVQRHASSGSFSPSGSEHPKED) are disordered. Residues S116 and S119 each carry the phosphoserine modification. A compositionally biased stretch (low complexity) spans 116–125 (SSGSFSPSGS). Glutaredoxin domains lie at 145 to 235 (CMLF…PKLE) and 236 to 334 (ERLK…KGEN). Residues C158 and C260 each coordinate [2Fe-2S] cluster.

Homodimer; the homodimer is independent of 2Fe-2S clusters. Heterotrimer; forms a heterotrimeric complex composed by two BOLA2 molecules and one GLRX3 molecule; linked by [2Fe-2S] clusters. Interacts (via N-terminus) with PRKCQ/PKC-theta. Interacts (via C-terminus) with CSRP3. Interacts with CSRP2.

The protein resides in the cytoplasm. The protein localises to the cytosol. Its subcellular location is the cell cortex. It is found in the myofibril. It localises to the sarcomere. The protein resides in the z line. Together with BOLA2, acts as a cytosolic iron-sulfur (Fe-S) cluster assembly factor that facilitates [2Fe-2S] cluster insertion into a subset of cytosolic proteins. Acts as a critical negative regulator of cardiac hypertrophy and a positive inotropic regulator. Required for hemoglobin maturation. Does not possess any thyoredoxin activity since it lacks the conserved motif that is essential for catalytic activity. This Bos taurus (Bovine) protein is Glutaredoxin-3 (GLRX3).